The primary structure comprises 907 residues: Probable dipeptidyl-aminopeptidase B (907 aa).

Residues 1–26 show a composition bias toward basic and acidic residues; sequence MPRQRAPKEEEAELLTKQERSTRSSE. Residues 1 to 70 are disordered; the sequence is MPRQRAPKEE…EKYTDEDDEA (70 aa). The Cytoplasmic segment spans residues 1 to 93; it reads MPRQRAPKEE…PVAVDKKTRR (93 aa). Residues 30–44 are compositionally biased toward low complexity; that stretch reads DASVSSISTTSLVLE. Residues 94–114 form a helical; Signal-anchor for type II membrane protein membrane-spanning segment; sequence WLWIVGIACVTGWALALVFFL. The Vacuolar segment spans residues 115–907; the sequence is MSGSYKHVST…SQVDARLERR (793 aa). N560 is a glycosylation site (N-linked (GlcNAc...) asparagine). S751 acts as the Charge relay system in catalysis. The N-linked (GlcNAc...) asparagine glycan is linked to N805. Residues D828 and H861 each act as charge relay system in the active site.

Belongs to the peptidase S9B family.

The protein resides in the vacuole membrane. It carries out the reaction Release of an N-terminal dipeptide, Xaa-Yaa-|-Zaa-, from a polypeptide, preferentially when Yaa is Pro, provided Zaa is neither Pro nor hydroxyproline.. Type IV dipeptidyl-peptidase which removes N-terminal dipeptides sequentially from polypeptides having unsubstituted N-termini provided that the penultimate residue is proline. The polypeptide is Probable dipeptidyl-aminopeptidase B (dapB) (Pyrenophora teres f. teres (strain 0-1) (Barley net blotch fungus)).